The primary structure comprises 375 residues: tRNA-specific 2-thiouridylase MnmA (375 aa).

ATP contacts are provided by residues 12–19 and methionine 38; that span reads GMSGGVDS. The segment at 98–100 is interaction with target base in tRNA; the sequence is NPD. Cysteine 103 functions as the Nucleophile in the catalytic mechanism. A disulfide bridge links cysteine 103 with cysteine 200. Glycine 127 lines the ATP pocket. Residues 150-152 are interaction with tRNA; the sequence is KDQ. Residue cysteine 200 is the Cysteine persulfide intermediate of the active site. Residues 312–313 are interaction with tRNA; it reads RY.

It belongs to the MnmA/TRMU family.

It is found in the cytoplasm. It catalyses the reaction S-sulfanyl-L-cysteinyl-[protein] + uridine(34) in tRNA + AH2 + ATP = 2-thiouridine(34) in tRNA + L-cysteinyl-[protein] + A + AMP + diphosphate + H(+). Catalyzes the 2-thiolation of uridine at the wobble position (U34) of tRNA, leading to the formation of s(2)U34. This Levilactobacillus brevis (strain ATCC 367 / BCRC 12310 / CIP 105137 / JCM 1170 / LMG 11437 / NCIMB 947 / NCTC 947) (Lactobacillus brevis) protein is tRNA-specific 2-thiouridylase MnmA.